A 396-amino-acid polypeptide reads, in one-letter code: Ribosomal RNA large subunit methyltransferase I (396 aa).

The 80-residue stretch at 2-81 (SVRLVLAKGR…ESIDIAFFTR (80 aa)) folds into the PUA domain.

It belongs to the methyltransferase superfamily. RlmI family.

The protein resides in the cytoplasm. The catalysed reaction is cytidine(1962) in 23S rRNA + S-adenosyl-L-methionine = 5-methylcytidine(1962) in 23S rRNA + S-adenosyl-L-homocysteine + H(+). Its function is as follows. Specifically methylates the cytosine at position 1962 (m5C1962) of 23S rRNA. The sequence is that of Ribosomal RNA large subunit methyltransferase I from Escherichia coli (strain SMS-3-5 / SECEC).